The chain runs to 116 residues: ATP-dependent Clp protease adapter protein ClpS (116 aa).

The span at 1-11 (MRRINTIMQGK) shows a compositional bias: polar residues. The interval 1–23 (MRRINTIMQGKTNGGNGPESGTV) is disordered.

Belongs to the ClpS family. In terms of assembly, binds to the N-terminal domain of the chaperone ClpA.

Involved in the modulation of the specificity of the ClpAP-mediated ATP-dependent protein degradation. This Brucella abortus (strain S19) protein is ATP-dependent Clp protease adapter protein ClpS.